A 668-amino-acid polypeptide reads, in one-letter code: UvrABC system protein C (668 aa).

The GIY-YIG domain occupies 14–91 (DSPGCYLHKD…IQRYKPKYNI (78 aa)). In terms of domain architecture, UVR spans 196 to 231 (KKIVNELEAKMMVSSDNMEFEQAAEYRDVIKAIGTL).

It belongs to the UvrC family. Interacts with UvrB in an incision complex.

Its subcellular location is the cytoplasm. Functionally, the UvrABC repair system catalyzes the recognition and processing of DNA lesions. UvrC both incises the 5' and 3' sides of the lesion. The N-terminal half is responsible for the 3' incision and the C-terminal half is responsible for the 5' incision. This Lactococcus lactis subsp. lactis (strain IL1403) (Streptococcus lactis) protein is UvrABC system protein C.